Here is a 512-residue protein sequence, read N- to C-terminus: MTDKLIIFDTTLRDGEQSPGASMTRDEKLRIARQLERLRVDVIEAGFAASSNGDFESVQAIARAVKDSTVCSLARANDRDIARAAEALKEANRARIHTFIATSALHMEKKLRMTPEQVLEQARQAVRFARNLVEDIEFSPEDGYRSDPDFLCRVIETVIAEGATTINVPDTVGYAIPELYGNFIKNLRERIPNSDKAIWSVHCHNDLGMAVANSLAGVKIGGARQVECTINGLGERAGNCSLEEVVMAVKTRRDYFGLDVGIDTQHIVAASRMVSQTTGFVVQPNKAVVGANAFAHASGIHQDGVLKARDTYEIMRAEDVGWSANKIVLGKLSGRNAFKQRLQELGVQLESEGEINVAFAKFKELADRKSEIFDEDILALVSDESVTSEKEQFGFVSLAQHSETGERPEATIVFTVDGKEVRSSAEGNGPVDASMKAIEAHVRSGAEMVLYSVNAISGSTESQGEVTVRLQSAGRVVNGVGADPDIVVASAKAYLSALNKLQSKAERVAAQG.

In terms of domain architecture, Pyruvate carboxyltransferase spans 5–268 (LIIFDTTLRD…DVGIDTQHIV (264 aa)). Mn(2+)-binding residues include Asp-14, His-202, His-204, and Asn-239. Residues 394-512 (GFVSLAQHSE…SKAERVAAQG (119 aa)) are regulatory domain.

This sequence belongs to the alpha-IPM synthase/homocitrate synthase family. LeuA type 1 subfamily. As to quaternary structure, homodimer. It depends on Mn(2+) as a cofactor.

The protein resides in the cytoplasm. The catalysed reaction is 3-methyl-2-oxobutanoate + acetyl-CoA + H2O = (2S)-2-isopropylmalate + CoA + H(+). It functions in the pathway amino-acid biosynthesis; L-leucine biosynthesis; L-leucine from 3-methyl-2-oxobutanoate: step 1/4. In terms of biological role, catalyzes the condensation of the acetyl group of acetyl-CoA with 3-methyl-2-oxobutanoate (2-ketoisovalerate) to form 3-carboxy-3-hydroxy-4-methylpentanoate (2-isopropylmalate). This Acidovorax ebreus (strain TPSY) (Diaphorobacter sp. (strain TPSY)) protein is 2-isopropylmalate synthase.